We begin with the raw amino-acid sequence, 431 residues long: Cyclic 2,3-diphosphoglycerate synthetase (431 aa).

Belongs to the cyclic 2,3-diphosphoglycerate synthetase family.

It localises to the cytoplasm. The enzyme catalyses (2R)-2,3-bisphosphoglycerate + ATP + H(+) = cyclic (2R)-2,3-bisphosphoglycerate + ADP + phosphate. Functionally, catalyzes the formation of cyclic 2,3-diphosphoglycerate (cDPG) by formation of an intramolecular phosphoanhydride bond at the expense of ATP. The sequence is that of Cyclic 2,3-diphosphoglycerate synthetase from Pyrococcus furiosus (strain ATCC 43587 / DSM 3638 / JCM 8422 / Vc1).